We begin with the raw amino-acid sequence, 570 residues long: Eukaryotic translation initiation factor 2A (570 aa).

2 WD repeats span residues 274–316 and 318–358; these read EKKG…FDTI and GPRN…EIIS. The tract at residues 468–526 is disordered; it reads PPHLRKPLGGGGSAGPPSAAAPTPGNQNQRPAQPRANGNGNAPQPFRPQQSEQERKAFQ. The span at 482 to 492 shows a compositional bias: low complexity; the sequence is GPPSAAAPTPG. A compositionally biased stretch (polar residues) spans 493-518; that stretch reads NQNQRPAQPRANGNGNAPQPFRPQQS. Positions 519-541 form a coiled coil; sequence EQERKAFQLKKKVEEIKVLKQRV.

This sequence belongs to the WD repeat EIF2A family.

Functions in the early steps of protein synthesis of a small number of specific mRNAs. Acts by directing the binding of methionyl-tRNAi to 40S ribosomal subunits. In contrast to the eIF-2 complex, it binds methionyl-tRNAi to 40S subunits in a codon-dependent manner, whereas the eIF-2 complex binds methionyl-tRNAi to 40S subunits in a GTP-dependent manner. The sequence is that of Eukaryotic translation initiation factor 2A from Caenorhabditis elegans.